We begin with the raw amino-acid sequence, 598 residues long: Fumarate reductase flavoprotein subunit (598 aa).

FAD contacts are provided by residues glycine 12–alanine 16, isoleucine 36–lysine 38, serine 44–glycine 52, histidine 156–valine 158, and aspartate 212. Histidine 45 is subject to Tele-8alpha-FAD histidine. Active-site residues include histidine 233 and arginine 249. FAD contacts are provided by residues histidine 356 to tyrosine 357, glutamate 380, and arginine 391 to leucine 397. The tract at residues alanine 577 to glycine 598 is disordered. The segment covering alanine 587–glycine 598 has biased composition (basic and acidic residues).

It belongs to the FAD-dependent oxidoreductase 2 family. FRD/SDH subfamily. Part of an enzyme complex containing four subunits: a flavoprotein (FrdA), an iron-sulfur protein (FrdB), and two hydrophobic anchor proteins (FrdC and FrdD). Interacts with SdhE. The cofactor is FAD.

The protein localises to the cell inner membrane. The catalysed reaction is a quinone + succinate = fumarate + a quinol. It carries out the reaction a menaquinone + succinate = a menaquinol + fumarate. Its function is as follows. Two distinct, membrane-bound, FAD-containing enzymes are responsible for the catalysis of fumarate and succinate interconversion; the fumarate reductase is used in anaerobic growth, and the succinate dehydrogenase is used in aerobic growth. The protein is Fumarate reductase flavoprotein subunit of Serratia sp. (strain ATCC 39006) (Prodigiosinella confusarubida).